Consider the following 2334-residue polypeptide: Centriolin (2334 aa).

The segment at 1 to 70 (MKKGSERRLS…ESTVPLEPQQ (70 aa)) is disordered. Residues 21-38 (PGPSSLRSSMRSRSLSPL) are compositionally biased toward low complexity. 4 LRR repeats span residues 126–147 (KLEVLNLSYNLIVKIEKVDKLL), 148–169 (RLRELNLSYNKISKIEGLENMC), 170–191 (NLQKLNLAGNEIEHIPVWFAKK), and 194–215 (SLRVLNLKGNKISSLQDVSKLK). In terms of domain architecture, LRRCT spans 228–266 (NPVVALPHYLQFIIFHLRSLESLEGQPVTTQDRQEAFER). Coiled-coil stretches lie at residues 265–343 (ERFS…VELT) and 437–800 (DLQL…LNHV). Disordered regions lie at residues 542–562 (DSLDPKDPKHSHMKAQKRGKE) and 751–771 (SLRDALGKAQSSEEKQQENNE). Serine 832 carries the post-translational modification Phosphoserine. The stretch at 858-1102 (EKEEAQVRER…ITRLRDVLNL (245 aa)) forms a coiled coil. Disordered regions lie at residues 1154–1198 (SKVS…PLPA), 1213–1245 (KSFSKREDADSGGDSQEESGLDDQEEPPFVPPP), and 1338–1360 (LKSKQREERRQKASTQHSEEEVD). Residues 1227-1238 (SQEESGLDDQEE) are compositionally biased toward acidic residues. The stretch at 1320 to 2169 (EHHNLENEVS…MRTLKSEVKD (850 aa)) forms a coiled coil. Residue serine 1478 is modified to Phosphoserine. Residues 1951 to 2121 (MMFQKLQKER…ELVAQDNHER (171 aa)) are required for centrosome localization. Positions 1988–2334 (QKSRLKQLLT…PLEEPNSYRH (347 aa)) are sufficient for interaction with HOOK2. The segment covering 2291–2307 (TSTSTDSASSPSLPSLV) has biased composition (low complexity). A disordered region spans residues 2291 to 2334 (TSTSTDSASSPSLPSLVEDSQHGHSQSSFQVLQVPLEEPNSYRH).

As to quaternary structure, interacts with HOOK2. Interacts with EXOC6 and SNAPIN. Associates with the exocyst complex. In terms of tissue distribution, highly expressed in liver.

The protein resides in the cytoplasm. The protein localises to the cytoskeleton. Its subcellular location is the microtubule organizing center. It localises to the centrosome. It is found in the midbody. The protein resides in the midbody ring. In terms of biological role, involved in cell cycle progression and cytokinesis. During the late steps of cytokinesis, anchors exocyst and SNARE complexes at the midbody, thereby allowing secretory vesicle-mediated abscission. This chain is Centriolin (Cntrl), found in Mus musculus (Mouse).